The primary structure comprises 417 residues: Phosphoglycerate kinase 2 (417 aa).

(2R)-3-phosphoglycerate contacts are provided by valine 23, aspartate 24, phenylalanine 25, asparagine 26, asparagine 38, arginine 39, serine 62, histidine 63, glycine 65, arginine 66, leucine 121, arginine 122, histidine 168, and arginine 169. Glycine 212 contacts ADP. Glycine 212 is a CDP binding site. Positions 213 and 214 each coordinate AMP. Residue alanine 213 coordinates ATP. Residue alanine 213 participates in Mg(2+) binding. Position 217 (aspartate 217) interacts with CDP. Aspartate 217 contacts Mg(2+). Lysine 218 contributes to the AMP binding site. Residue lysine 218 coordinates ATP. Glycine 236 is a binding site for ADP. Glycine 236 is a CDP binding site. The AMP site is built by glycine 237 and glycine 312. ATP-binding residues include glycine 237 and glycine 312. 2 residues coordinate CDP: glycine 337 and phenylalanine 342. Phenylalanine 342 lines the ADP pocket. Residue glutamate 343 participates in AMP binding. ATP is bound by residues glutamate 343, aspartate 374, and threonine 375. Aspartate 374 serves as a coordination point for Mg(2+).

This sequence belongs to the phosphoglycerate kinase family. In terms of assembly, monomer. Mg(2+) is required as a cofactor.

It is found in the cytoplasm. The protein localises to the mitochondrion. The enzyme catalyses (2R)-3-phosphoglycerate + ATP = (2R)-3-phospho-glyceroyl phosphate + ADP. It participates in carbohydrate degradation; glycolysis; pyruvate from D-glyceraldehyde 3-phosphate: step 2/5. Its function is as follows. Catalyzes one of the two ATP producing reactions in the glycolytic pathway via the reversible conversion of 1,3-diphosphoglycerate to 3-phosphoglycerate. Both L- and D- forms of purine and pyrimidine nucleotides can be used as substrates, but the activity is much lower on pyrimidines. Negatively regulates the biosynthesis of acetyl-CoA from pyruvate in the mitochondrion. The polypeptide is Phosphoglycerate kinase 2 (PGK2) (Rhizopus niveus).